The sequence spans 675 residues: Vitamin K-dependent protein S (675 aa).

An N-terminal signal peptide occupies residues 1–24 (MRVLGGRTGTLLACLALVLPVLEA). The propeptide occupies 25–41 (NFLSRQHASQVLIRRRR). A Gla domain is found at 42-87 (ANTLLEETKKGNLERECIEELCNKEEAREIFENNPETEYFYPKYLG). 4-carboxyglutamate occurs at positions 47, 48, 55, 57, 60, 61, 66, 67, 70, 73, and 77. Cys-58 and Cys-63 are disulfide-bonded. Intrachain disulfides connect Cys-88/Cys-113, Cys-121/Cys-134, Cys-126/Cys-143, Cys-145/Cys-154, Cys-161/Cys-175, Cys-171/Cys-184, Cys-186/Cys-199, Cys-205/Cys-217, Cys-212/Cys-226, Cys-228/Cys-241, Cys-247/Cys-256, Cys-252/Cys-265, Cys-267/Cys-282, Cys-288/Cys-567, Cys-449/Cys-475, and Cys-638/Cys-665. Residues 88–116 (CLGSFRAGLFTAARLSTNAYPDLRSCVNA) are thrombin-sensitive. The 39-residue stretch at 117–155 (ISDQCNPLPCNEDGFMTCKDGQATFTCICKSGWQGEKCE) folds into the EGF-like 1 domain. Asp-136 is subject to (3R)-3-hydroxyaspartate. An EGF-like 2; calcium-binding domain is found at 157 to 200 (DINECKDPVNINGGCSQICENTPGSYHCSCKNGFVMLSNKKDCK). Asn-177 bears the (3R)-3-hydroxyasparagine mark. The region spanning 201-242 (DVDECVLKPSICGTAVCKNIPGDFECECAEGYKYNPVSKSCD) is the EGF-like 3; calcium-binding domain. Position 219 is a (3R)-3-hydroxyasparagine (Asn-219). The EGF-like 4; calcium-binding domain occupies 243–283 (DVDECAENLCAQLCVNYPGGYSCYCDGKKGFKLAQDQKSCE). Position 258 is a (3R)-3-hydroxyasparagine (Asn-258). Laminin G-like domains are found at residues 299–475 (LLYL…NKHC) and 484–665 (YYPG…AHSC). N-linked (GlcNAc...) asparagine glycosylation is found at Asn-499 and Asn-509.

In terms of processing, the iron and 2-oxoglutarate dependent 3-hydroxylation of aspartate and asparagine is (R) stereospecific within EGF domains. Plasma.

It localises to the secreted. Functionally, anticoagulant plasma protein; it is a cofactor to activated protein C in the degradation of coagulation factors Va and VIIIa. It helps to prevent coagulation and stimulating fibrinolysis. The protein is Vitamin K-dependent protein S (PROS1) of Bos taurus (Bovine).